Consider the following 273-residue polypeptide: Chlorophyll a-b binding protein 8, chloroplastic (273 aa).

The N-terminal 32 residues, 1 to 32 (MATQALISSSSISTSAEAARQIIGSRISQSVT), are a transit peptide targeting the chloroplast. Position 33 is an N2-acetylarginine (Arg33). Position 56 (Trp56) interacts with chlorophyll b. Phe76, Ser82, and Glu100 together coordinate chlorophyll a. Residue Arg105 coordinates chlorophyll b. Residues 106–126 (FAMLGAAGAIAPEILGKAGLI) traverse the membrane as a helical segment. The chlorophyll b site is built by Ile140, Glu167, and Arg170. Lys224, Glu225, Asn228, Arg230, Gln242, and His257 together coordinate chlorophyll a. A helical membrane pass occupies residues 231–251 (LAMLAILGYFIQALVTGVGPY).

It belongs to the light-harvesting chlorophyll a/b-binding (LHC) protein family. In terms of assembly, the LHC complex consists of chlorophyll a-b binding proteins. The cofactor is Binds at least 14 chlorophylls (8 Chl-a and 6 Chl-b) and carotenoids such as lutein and neoxanthin.. Photoregulated by reversible phosphorylation of its threonine residues.

Its subcellular location is the plastid. The protein localises to the chloroplast thylakoid membrane. Its function is as follows. The light-harvesting complex (LHC) functions as a light receptor, it captures and delivers excitation energy to photosystems with which it is closely associated. The chain is Chlorophyll a-b binding protein 8, chloroplastic (CAB8) from Solanum lycopersicum (Tomato).